Here is a 596-residue protein sequence, read N- to C-terminus: Elongation factor 4 (596 aa).

The region spanning 2–184 (KHIRNFSIIA…TIVAQIPPPE (183 aa)) is the tr-type G domain. GTP contacts are provided by residues 14–19 (DHGKST) and 131–134 (NKID).

The protein belongs to the TRAFAC class translation factor GTPase superfamily. Classic translation factor GTPase family. LepA subfamily.

The protein resides in the cell inner membrane. The enzyme catalyses GTP + H2O = GDP + phosphate + H(+). Its function is as follows. Required for accurate and efficient protein synthesis under certain stress conditions. May act as a fidelity factor of the translation reaction, by catalyzing a one-codon backward translocation of tRNAs on improperly translocated ribosomes. Back-translocation proceeds from a post-translocation (POST) complex to a pre-translocation (PRE) complex, thus giving elongation factor G a second chance to translocate the tRNAs correctly. Binds to ribosomes in a GTP-dependent manner. This is Elongation factor 4 from Shewanella loihica (strain ATCC BAA-1088 / PV-4).